A 245-amino-acid polypeptide reads, in one-letter code: DNA polymerase sliding clamp (245 aa).

It belongs to the PCNA family. In terms of assembly, homotrimer. The subunits circularize to form a toroid; DNA passes through its center. Replication factor C (RFC) is required to load the toroid on the DNA.

Sliding clamp subunit that acts as a moving platform for DNA processing. Responsible for tethering the catalytic subunit of DNA polymerase and other proteins to DNA during high-speed replication. The polypeptide is DNA polymerase sliding clamp (Methanococcoides burtonii (strain DSM 6242 / NBRC 107633 / OCM 468 / ACE-M)).